A 755-amino-acid chain; its full sequence is uncharacterized protein (755 aa).

7 disordered regions span residues 1-44, 72-91, 99-174, 393-467, 523-545, 584-672, and 734-755; these read MAAP…AAAQ, AEHS…ATAQ, FSLS…IPHY, TTNV…SSSR, LPKT…EGGG, VSSS…LPSG, and QAAT…PRRK. Composition is skewed to low complexity over residues 10 to 25 and 35 to 44; these read TTTQ…TTTT and TTTGSGAAAQ. Composition is skewed to low complexity over residues 112 to 130, 139 to 151, and 393 to 412; these read ISSS…NASS, SPDL…LSGS, and TTNV…TKST. Over residues 429-446 the composition is skewed to acidic residues; the sequence is IEEDTIQFDDPGQGEDDN. Over residues 452-462 the composition is skewed to pro residues; it reads NTPPPPGPPPN. The segment covering 536–545 has biased composition (gly residues); the sequence is ATGGVTEGGG. Polar residues predominate over residues 590–599; sequence LPQPQVATTI. 2 stretches are compositionally biased toward low complexity: residues 600–666 and 740–755; these read TPQA…QTPQ and SQPS…PRRK.

The protein belongs to the chlamydial CPn_0572/CT_456/TC_0741 family.

This is an uncharacterized protein from Chlamydia pneumoniae (Chlamydophila pneumoniae).